The following is a 450-amino-acid chain: GTPase HflX (450 aa).

2 disordered regions span residues 79 to 110 and 173 to 196; these read TSMA…PDAA and RLRE…TLAL. Gly residues predominate over residues 178–189; sequence SGGGGRQQGPGA. A Hflx-type G domain is found at 230–395; the sequence is LRVALVGYTN…TLIAFFEAEM (166 aa). GTP is bound by residues 236–243, 261–265, 283–286, 349–352, and 373–375; these read GYTNAGKS, FATLD, DTVG, NKMD, and SAH. Mg(2+) contacts are provided by serine 243 and threonine 263.

Belongs to the TRAFAC class OBG-HflX-like GTPase superfamily. HflX GTPase family. As to quaternary structure, monomer. Associates with the 50S ribosomal subunit. Mg(2+) is required as a cofactor.

The protein localises to the cytoplasm. Functionally, GTPase that associates with the 50S ribosomal subunit and may have a role during protein synthesis or ribosome biogenesis. The polypeptide is GTPase HflX (Gluconacetobacter diazotrophicus (strain ATCC 49037 / DSM 5601 / CCUG 37298 / CIP 103539 / LMG 7603 / PAl5)).